A 295-amino-acid polypeptide reads, in one-letter code: Ethanolamine ammonia-lyase small subunit (295 aa).

V207, E228, and C258 together coordinate adenosylcob(III)alamin.

Belongs to the EutC family. The basic unit is a heterodimer which dimerizes to form tetramers. The heterotetramers trimerize; 6 large subunits form a core ring with 6 small subunits projecting outwards. It depends on adenosylcob(III)alamin as a cofactor.

Its subcellular location is the bacterial microcompartment. It catalyses the reaction ethanolamine = acetaldehyde + NH4(+). The protein operates within amine and polyamine degradation; ethanolamine degradation. In terms of biological role, catalyzes the deamination of various vicinal amino-alcohols to oxo compounds. Allows this organism to utilize ethanolamine as the sole source of nitrogen and carbon in the presence of external vitamin B12. This is Ethanolamine ammonia-lyase small subunit from Escherichia coli O81 (strain ED1a).